Here is a 107-residue protein sequence, read N- to C-terminus: Transcriptional regulator Rv3488 (107 aa).

The Cd(2+) site is built by H16, E30, H34, and H101.

In terms of assembly, homodimer.

May have transcription regulation and metal-detoxifying functions through which it may enhance intracellular survival of mycobacteria. Binds to its own promoter region and to the Rv1999c promoter region. It displays strong affinity for cadmium ions, but can also bind zinc, manganese and nickel. Expression increases the intracellular survival of recombinant M.smegmatis in murine macrophage cell line and increases its tolerance to cadmium ions. In Mycobacterium tuberculosis (strain ATCC 25618 / H37Rv), this protein is Transcriptional regulator Rv3488.